A 232-amino-acid chain; its full sequence is H-2 class II histocompatibility antigen, E-S beta chain (232 aa).

The beta-1 stretch occupies residues 1–90 (WFLEYSTSEC…LDKFLVPRRV (90 aa)). Topologically, residues 1–193 (WFLEYSTSEC…KAQSTSAQNK (193 aa)) are extracellular. 2 disulfides stabilise this stretch: Cys-10–Cys-74 and Cys-112–Cys-168. Residue Asn-14 is glycosylated (N-linked (GlcNAc...) asparagine). The segment at 91–193 (EPTVTVYPTK…KAQSTSAQNK (103 aa)) is beta-2. An Ig-like C1-type domain is found at 92–182 (PTVTVYPTKT…PSLTDPVTVE (91 aa)). A helical transmembrane segment spans residues 194–216 (MLSGVGGFVLGLLFLGAGLFIYF). The Cytoplasmic segment spans residues 217–232 (RNQKGQSGLQPTGLLS).

This sequence belongs to the MHC class II family. Ubiquitinated in immature dendritic cells leading to down-regulation of MHC class II.

The protein resides in the membrane. The polypeptide is H-2 class II histocompatibility antigen, E-S beta chain (H2-Eb1) (Mus musculus (Mouse)).